The following is a 238-amino-acid chain: UPF0280 protein Msm_0088 (238 aa).

The protein belongs to the UPF0280 family.

The chain is UPF0280 protein Msm_0088 from Methanobrevibacter smithii (strain ATCC 35061 / DSM 861 / OCM 144 / PS).